The sequence spans 216 residues: Homeobox-leucine zipper protein ATHB-40 (216 aa).

The interval 28 to 52 is disordered; it reads GEVKQPKRRRKKTKGSVASADGGNG. Positions 52–111 form a DNA-binding region, homeobox; that stretch reads GLFRKRKLTDEQVNMLEMSFGDEHKLESERKDRLAAELGLDPRQVAVWFQNRRARWKNKR. The tract at residues 112–140 is leucine-zipper; it reads LEEEYNKLKNSHDNVVVDKCRLESEVIQL.

The protein belongs to the HD-ZIP homeobox family. Class I subfamily. In terms of tissue distribution, expressed in roots, flowers and siliques.

The protein localises to the nucleus. Probable transcription factor. This is Homeobox-leucine zipper protein ATHB-40 (ATHB-40) from Arabidopsis thaliana (Mouse-ear cress).